The chain runs to 499 residues: DNA-directed RNA polymerase subunit Rpo2N (499 aa).

The protein belongs to the RNA polymerase beta chain family. As to quaternary structure, part of the RNA polymerase complex.

It localises to the cytoplasm. It catalyses the reaction RNA(n) + a ribonucleoside 5'-triphosphate = RNA(n+1) + diphosphate. Its function is as follows. DNA-dependent RNA polymerase (RNAP) catalyzes the transcription of DNA into RNA using the four ribonucleoside triphosphates as substrates. The Rpo2 subunit (Rpo2N and Rpo2C in this organism) is implicated in DNA promoter recognition and in nucleotide binding. The protein is DNA-directed RNA polymerase subunit Rpo2N of Methanococcus vannielii (strain ATCC 35089 / DSM 1224 / JCM 13029 / OCM 148 / SB).